A 120-amino-acid polypeptide reads, in one-letter code: NAD(P)H-quinone oxidoreductase subunit 3, chloroplastic (120 aa).

Helical transmembrane passes span 9–29, 64–84, and 88–108; these read IFWA…IISG, MFAL…PWAV, and VLGV…VVGS.

The protein belongs to the complex I subunit 3 family. In terms of assembly, NDH is composed of at least 16 different subunits, 5 of which are encoded in the nucleus.

It localises to the plastid. The protein localises to the chloroplast thylakoid membrane. It catalyses the reaction a plastoquinone + NADH + (n+1) H(+)(in) = a plastoquinol + NAD(+) + n H(+)(out). The catalysed reaction is a plastoquinone + NADPH + (n+1) H(+)(in) = a plastoquinol + NADP(+) + n H(+)(out). Functionally, NDH shuttles electrons from NAD(P)H:plastoquinone, via FMN and iron-sulfur (Fe-S) centers, to quinones in the photosynthetic chain and possibly in a chloroplast respiratory chain. The immediate electron acceptor for the enzyme in this species is believed to be plastoquinone. Couples the redox reaction to proton translocation, and thus conserves the redox energy in a proton gradient. In Nuphar advena (Common spatterdock), this protein is NAD(P)H-quinone oxidoreductase subunit 3, chloroplastic.